The chain runs to 367 residues: Probable thylakoidal processing peptidase 2, chloroplastic (367 aa).

The transit peptide at 1-68 directs the protein to the chloroplast; the sequence is MAIRVTFTYS…NTWGPSSGPR (68 aa). Residues 53 to 72 are disordered; the sequence is DKSPGSNTWGPSSGPRARPA. The span at 62–72 shows a compositional bias: low complexity; that stretch reads GPSSGPRARPA. The chain crosses the membrane as a helical span at residues 185–205; the sequence is EDAKAAFTAVTVSLLFRSALA. Over 206–367 the chain is Lumenal, thylakoid; that stretch reads EPKSIPSTSM…VSQKRAVDVS (162 aa). Serine 214 is an active-site residue.

It belongs to the peptidase S26 family.

The protein localises to the plastid. It localises to the chloroplast thylakoid membrane. The catalysed reaction is Cleavage of hydrophobic, N-terminal signal or leader sequences from secreted and periplasmic proteins.. Cleaves the thylakoid-transfer domain from a chloroplast protein. This is Probable thylakoidal processing peptidase 2, chloroplastic (TPP2) from Arabidopsis thaliana (Mouse-ear cress).